The sequence spans 361 residues: Chorismate synthase (361 aa).

Residue R48 coordinates NADP(+). FMN contacts are provided by residues R126–S128, G269, K302–S306, and N328.

This sequence belongs to the chorismate synthase family. Homotetramer. Requires FMNH2 as cofactor.

The catalysed reaction is 5-O-(1-carboxyvinyl)-3-phosphoshikimate = chorismate + phosphate. The protein operates within metabolic intermediate biosynthesis; chorismate biosynthesis; chorismate from D-erythrose 4-phosphate and phosphoenolpyruvate: step 7/7. Functionally, catalyzes the anti-1,4-elimination of the C-3 phosphate and the C-6 proR hydrogen from 5-enolpyruvylshikimate-3-phosphate (EPSP) to yield chorismate, which is the branch point compound that serves as the starting substrate for the three terminal pathways of aromatic amino acid biosynthesis. This reaction introduces a second double bond into the aromatic ring system. The sequence is that of Chorismate synthase from Treponema denticola (strain ATCC 35405 / DSM 14222 / CIP 103919 / JCM 8153 / KCTC 15104).